Consider the following 160-residue polypeptide: Ribosomal RNA large subunit methyltransferase H (160 aa).

S-adenosyl-L-methionine-binding residues include leucine 76 and glycine 108.

This sequence belongs to the RNA methyltransferase RlmH family. As to quaternary structure, homodimer.

Its subcellular location is the cytoplasm. It carries out the reaction pseudouridine(1915) in 23S rRNA + S-adenosyl-L-methionine = N(3)-methylpseudouridine(1915) in 23S rRNA + S-adenosyl-L-homocysteine + H(+). Specifically methylates the pseudouridine at position 1915 (m3Psi1915) in 23S rRNA. The protein is Ribosomal RNA large subunit methyltransferase H of Xanthobacter autotrophicus (strain ATCC BAA-1158 / Py2).